Consider the following 510-residue polypeptide: Bifunctional pantoate ligase/cytidylate kinase (510 aa).

The segment at 1–276 (MNKIIIRKTE…CGKTRLIDHV (276 aa)) is pantoate--beta-alanine ligase. Residue 29-36 (MGNLHDGH) coordinates ATP. The active-site Proton donor is histidine 36. (R)-pantoate is bound at residue glutamine 61. A beta-alanine-binding site is contributed by glutamine 61. 150 to 153 (GEKD) contributes to the ATP binding site. Glutamine 156 provides a ligand contact to (R)-pantoate. 187–190 (FSSR) contacts ATP. The cytidylate kinase stretch occupies residues 277–510 (FLMKRKPIIA…LNIPKEIQLE (234 aa)).

In the N-terminal section; belongs to the pantothenate synthetase family. The protein in the C-terminal section; belongs to the cytidylate kinase family. Type 1 subfamily.

Its subcellular location is the cytoplasm. It catalyses the reaction (R)-pantoate + beta-alanine + ATP = (R)-pantothenate + AMP + diphosphate + H(+). The enzyme catalyses CMP + ATP = CDP + ADP. It carries out the reaction dCMP + ATP = dCDP + ADP. It functions in the pathway cofactor biosynthesis; (R)-pantothenate biosynthesis; (R)-pantothenate from (R)-pantoate and beta-alanine: step 1/1. Catalyzes the condensation of pantoate with beta-alanine in an ATP-dependent reaction via a pantoyl-adenylate intermediate. Functionally, catalyzes the transfer of a phosphate group from ATP to either CMP or dCMP to form CDP or dCDP and ADP, respectively. In Prochlorococcus marinus subsp. pastoris (strain CCMP1986 / NIES-2087 / MED4), this protein is Bifunctional pantoate ligase/cytidylate kinase.